A 402-amino-acid polypeptide reads, in one-letter code: Tyrosine-protein kinase transforming protein ros (402 aa).

In terms of domain architecture, Protein kinase spans 98 to 377 (LNLHKLLGSG…KLQEIRHSPL (280 aa)). Residues 104 to 112 (LGSGAFGEV) and lysine 133 contribute to the ATP site. The Proton acceptor role is filled by aspartate 232. Tyrosine 268 bears the Phosphotyrosine; by autocatalysis mark.

It belongs to the protein kinase superfamily. Tyr protein kinase family. Insulin receptor subfamily.

The enzyme catalyses L-tyrosyl-[protein] + ATP = O-phospho-L-tyrosyl-[protein] + ADP + H(+). The chain is Tyrosine-protein kinase transforming protein ros (V-ROS) from Galliformes (UR2SV).